A 119-amino-acid polypeptide reads, in one-letter code: UPF0102 protein Nmul_A0195 (119 aa).

This sequence belongs to the UPF0102 family.

This Nitrosospira multiformis (strain ATCC 25196 / NCIMB 11849 / C 71) protein is UPF0102 protein Nmul_A0195.